Here is a 331-residue protein sequence, read N- to C-terminus: Pantothenate kinase (331 aa).

Position 109 to 116 (Gly109 to Ser116) interacts with ATP.

It belongs to the prokaryotic pantothenate kinase family.

The protein resides in the cytoplasm. It carries out the reaction (R)-pantothenate + ATP = (R)-4'-phosphopantothenate + ADP + H(+). Its pathway is cofactor biosynthesis; coenzyme A biosynthesis; CoA from (R)-pantothenate: step 1/5. The polypeptide is Pantothenate kinase (Sinorhizobium fredii (strain NBRC 101917 / NGR234)).